Reading from the N-terminus, the 264-residue chain is tRNA (guanine-N(1)-)-methyltransferase (264 aa).

S-adenosyl-L-methionine contacts are provided by residues Gly-125 and 145-150 (LGDFVL).

This sequence belongs to the RNA methyltransferase TrmD family. In terms of assembly, homodimer.

The protein localises to the cytoplasm. It carries out the reaction guanosine(37) in tRNA + S-adenosyl-L-methionine = N(1)-methylguanosine(37) in tRNA + S-adenosyl-L-homocysteine + H(+). Its function is as follows. Specifically methylates guanosine-37 in various tRNAs. The protein is tRNA (guanine-N(1)-)-methyltransferase of Burkholderia vietnamiensis (strain G4 / LMG 22486) (Burkholderia cepacia (strain R1808)).